Consider the following 90-residue polypeptide: DNA-directed RNA polymerase subunit omega (90 aa).

Positions 69–90 are disordered; that stretch reads RQEQQEQDAAELAAVSSITHNR.

This sequence belongs to the RNA polymerase subunit omega family. The RNAP catalytic core consists of 2 alpha, 1 beta, 1 beta' and 1 omega subunit. When a sigma factor is associated with the core the holoenzyme is formed, which can initiate transcription.

It catalyses the reaction RNA(n) + a ribonucleoside 5'-triphosphate = RNA(n+1) + diphosphate. Functionally, promotes RNA polymerase assembly. Latches the N- and C-terminal regions of the beta' subunit thereby facilitating its interaction with the beta and alpha subunits. The sequence is that of DNA-directed RNA polymerase subunit omega from Aliivibrio salmonicida (strain LFI1238) (Vibrio salmonicida (strain LFI1238)).